Reading from the N-terminus, the 361-residue chain is Phosphoserine aminotransferase (361 aa).

L-glutamate is bound at residue Arg-42. Pyridoxal 5'-phosphate contacts are provided by residues 76–77 (AT), Trp-102, Thr-152, Asp-172, and Gln-195. Lys-196 is subject to N6-(pyridoxal phosphate)lysine. Residue 237–238 (NT) coordinates pyridoxal 5'-phosphate.

It belongs to the class-V pyridoxal-phosphate-dependent aminotransferase family. SerC subfamily. Homodimer. The cofactor is pyridoxal 5'-phosphate.

The protein localises to the cytoplasm. It carries out the reaction O-phospho-L-serine + 2-oxoglutarate = 3-phosphooxypyruvate + L-glutamate. The catalysed reaction is 4-(phosphooxy)-L-threonine + 2-oxoglutarate = (R)-3-hydroxy-2-oxo-4-phosphooxybutanoate + L-glutamate. The protein operates within amino-acid biosynthesis; L-serine biosynthesis; L-serine from 3-phospho-D-glycerate: step 2/3. It functions in the pathway cofactor biosynthesis; pyridoxine 5'-phosphate biosynthesis; pyridoxine 5'-phosphate from D-erythrose 4-phosphate: step 3/5. Functionally, catalyzes the reversible conversion of 3-phosphohydroxypyruvate to phosphoserine and of 3-hydroxy-2-oxo-4-phosphonooxybutanoate to phosphohydroxythreonine. The sequence is that of Phosphoserine aminotransferase from Xanthomonas axonopodis pv. citri (strain 306).